Reading from the N-terminus, the 656-residue chain is F-box/LRR-repeat protein 10 (656 aa).

Positions 20-66 constitute an F-box domain; that stretch reads ERSLDLLPAALLETIMTKLDVASLCSLASTCKTLKSCVTRVLTFTPN. LRR repeat units lie at residues 71–96, 120–145, 151–176, 194–221, 243–268, 277–301, 310–335, 336–361, 362–387, 388–412, 413–437, 439–463, 464–491, 492–517, 518–551, and 552–578; these read NVSL…KLDC, CRDF…CLGS, GRSI…ALMF, SDRL…EISG, VDCI…DIRD, VSDL…SLIR, FRRV…CLGG, FCRV…SIYH, GPKL…SLRR, CHLL…DLRG, CRNL…LLDG, DISD…SVRG, CRNL…DLSN, LPNL…QLRE, CRLI…DLYD, and CGGI…GITG. A disordered region spans residues 632–656; sequence ILGDEGDVEMEDAEDESEEDASEED.

The protein is F-box/LRR-repeat protein 10 (FBL10) of Arabidopsis thaliana (Mouse-ear cress).